Reading from the N-terminus, the 381-residue chain is Testis-specific expressed protein 55 (381 aa).

2 disordered regions span residues 1–176 (MDEP…SDPH) and 292–317 (TTEY…QSSR). Composition is skewed to basic and acidic residues over residues 8–24 (SLNH…EKNN) and 65–103 (RTSE…ERRT). The span at 104–113 (SQPPNQQLPS) shows a compositional bias: polar residues. The segment covering 114 to 125 (HSERKTSGKIDG) has biased composition (basic and acidic residues). Over residues 134–143 (TDQETSEFDD) the composition is skewed to acidic residues. 2 stretches are compositionally biased toward polar residues: residues 147–163 (SAST…QEYN) and 292–302 (TTEYTSDTTPV). The segment covering 307–317 (RSSQRSSQSSR) has biased composition (low complexity).

As to expression, testis-specific.

It is found in the nucleus. In Mus musculus (Mouse), this protein is Testis-specific expressed protein 55.